The following is a 643-amino-acid chain: Phosphatidylinositol-3,5-bisphosphate 3-phosphatase MTMR2 (643 aa).

Polar residues-rich tracts occupy residues 1 to 12 (MEKSSSCESLGS) and 23 to 40 (DSLS…VHTK). A disordered region spans residues 1-54 (MEKSSSCESLGSQPAVARPPSVDSLSSASTSHSENSVHTKSASVVSSDSISTSA). Residues Ser6 and Ser9 each carry the phosphoserine modification. Residues 41-54 (SASVVSSDSISTSA) are compositionally biased toward low complexity. Ser58 is modified (phosphoserine). The 72-residue stretch at 68–139 (NKLAEMEEPP…GVISRVEKIG (72 aa)) folds into the GRAM domain. A Myotubularin phosphatase domain is found at 205–580 (GWKLYDSLSE…RHLELWVGYY (376 aa)). A 1,2-diacyl-sn-glycero-3-phospho-(1D-myo-inositol-3,5-bisphosphate) contacts are provided by Asn330, Asn355, and Ile356. Positions 330, 355, and 356 each coordinate a 1,2-diacyl-sn-glycero-3-phospho-(1D-myo-inositol-3-phosphate). The active-site Phosphocysteine intermediate is the Cys417. Residues Ser418, Asp419, Gly420, Trp421, Asp422, Arg423, Arg459, and Arg463 each contribute to the a 1,2-diacyl-sn-glycero-3-phospho-(1D-myo-inositol-3,5-bisphosphate) site. A 1,2-diacyl-sn-glycero-3-phospho-(1D-myo-inositol-3-phosphate) is bound by residues Ser418, Asp419, Gly420, Trp421, Asp422, and Arg423. Position 463 (Arg463) interacts with a 1,2-diacyl-sn-glycero-3-phospho-(1D-myo-inositol-3-phosphate). Residues 593–627 (IHNRYKELLAKRAELQKKVEELQREISNRSTSSSE) adopt a coiled-coil conformation. The disordered stretch occupies residues 614-643 (LQREISNRSTSSSERAGSPAQCVTPVQTVV).

It belongs to the protein-tyrosine phosphatase family. Non-receptor class myotubularin subfamily. As to quaternary structure, homodimer (via coiled-coil domain). Heterotetramer consisting of one MTMR2 dimer and one SBF2/MTMR13 dimer; specifically in peripheral nerves stabilizes SBF2/MTMR13 at the membranes and increases MTMR2 catalytic activity towards phosphatidylinositol 3,5-bisphosphate and to a lesser extent towards phosphatidylinositol 3-phosphate. Heterodimer with SBF1/MTMR5; acts as an adapter for the phosphatase MTMR2 to regulate MTMR2 catalytic activity and subcellular location. Heterodimer with MTMR12. Phosphorylation at Ser-58 decreases MTMR2 localization to endocytic vesicular structures.

It is found in the cytoplasm. It localises to the early endosome membrane. The protein localises to the perinuclear region. Its subcellular location is the cell projection. The protein resides in the axon. It is found in the endosome membrane. It carries out the reaction a 1,2-diacyl-sn-glycero-3-phospho-(1D-myo-inositol-3,5-bisphosphate) + H2O = a 1,2-diacyl-sn-glycero-3-phospho-(1D-myo-inositol-5-phosphate) + phosphate. The enzyme catalyses a 1,2-diacyl-sn-glycero-3-phospho-(1D-myo-inositol-3-phosphate) + H2O = a 1,2-diacyl-sn-glycero-3-phospho-(1D-myo-inositol) + phosphate. The catalysed reaction is 1,2-dioctanoyl-sn-glycero-3-phospho-(1-D-myo-inositol-3-phosphate) + H2O = 1,2-dioctanoyl-sn-glycero-3-phospho-(1D-myo-inositol) + phosphate. It catalyses the reaction 1,2-dioctanoyl-sn-glycero-3-phospho-(1D-myo-inositol-3,5-bisphosphate) + H2O = 1,2-dioctanoyl-sn-glycero-3-phospho-(1D-myo-inositol-5-phosphate) + phosphate. Functionally, lipid phosphatase that specifically dephosphorylates the D-3 position of phosphatidylinositol 3-phosphate and phosphatidylinositol 3,5-bisphosphate, generating phosphatidylinositol and phosphatidylinositol 5-phosphate. Regulates the level of these phosphoinositides critical for various biological processes including autophagy initiation and autophagosome maturation. In Bos taurus (Bovine), this protein is Phosphatidylinositol-3,5-bisphosphate 3-phosphatase MTMR2.